The chain runs to 27 residues: Bombinin-like peptide 2 (27 aa).

Asn27 bears the Asparagine amide mark.

It belongs to the bombinin family. Expressed by the skin glands.

The protein resides in the secreted. Functionally, has antimicrobial activity, but no hemolytic activity. Preference on killing Gram-negative non-enteric bacteria. The chain is Bombinin-like peptide 2 from Bombina orientalis (Oriental fire-bellied toad).